Here is a 158-residue protein sequence, read N- to C-terminus: uncharacterized protein (158 aa).

This is an uncharacterized protein from Methanocaldococcus jannaschii (strain ATCC 43067 / DSM 2661 / JAL-1 / JCM 10045 / NBRC 100440) (Methanococcus jannaschii).